A 97-amino-acid polypeptide reads, in one-letter code: Zinc metalloproteinase-disintegrin-like bothrojarin-4 (97 aa).

One can recognise a Disintegrin domain in the interval 4–90 (PPVCGNYFVE…DCPTDRFRRN (87 aa)). The Ca(2+) site is built by Val6, Asn9, Phe11, Glu13, Glu16, and Asp19. Cystine bridges form between Cys7-Cys36, Cys18-Cys31, Cys20-Cys26, Cys30-Cys53, Cys44-Cys50, Cys49-Cys75, and Cys62-Cys82. N-linked (GlcNAc...) asparagine glycosylation occurs at Asn32. The D/ECD-tripeptide; atypical (KCD) signature appears at 68–70 (KCD).

This sequence belongs to the venom metalloproteinase (M12B) family. P-III subfamily. P-IIIa sub-subfamily. In terms of assembly, monomer. Requires Zn(2+) as cofactor. As to expression, expressed by the venom gland.

The protein resides in the secreted. Functionally, the hemorrhagic metalloproteinase-disintegrin-like bothrojarin-1 is a potent inhibitor of collagen-induced platelet aggregation by blockage of alpha-2/beta-1 (ITGA2/ITGB1) integrin. It does not present any fibrinogen-clotting activity. This is Zinc metalloproteinase-disintegrin-like bothrojarin-4 from Bothrops jararaca (Jararaca).